Here is a 171-residue protein sequence, read N- to C-terminus: Large ribosomal subunit protein uL10 (171 aa).

It belongs to the universal ribosomal protein uL10 family. Part of the ribosomal stalk of the 50S ribosomal subunit. The N-terminus interacts with L11 and the large rRNA to form the base of the stalk. The C-terminus forms an elongated spine to which L12 dimers bind in a sequential fashion forming a multimeric L10(L12)X complex.

Its function is as follows. Forms part of the ribosomal stalk, playing a central role in the interaction of the ribosome with GTP-bound translation factors. The polypeptide is Large ribosomal subunit protein uL10 (Nitrosomonas eutropha (strain DSM 101675 / C91 / Nm57)).